Reading from the N-terminus, the 779-residue chain is Phosphoribosylformylglycinamidine synthase subunit PurL (779 aa).

Histidine 52 is an active-site residue. Residues tyrosine 55 and lysine 94 each contribute to the ATP site. Glutamate 96 serves as a coordination point for Mg(2+). Residues 97-100 (SHNH) and arginine 119 contribute to the substrate site. The active-site Proton acceptor is the histidine 98. Mg(2+) is bound at residue aspartate 120. Residue glutamine 243 coordinates substrate. Aspartate 271 serves as a coordination point for Mg(2+). A substrate-binding site is contributed by 315–317 (ESQ). 2 residues coordinate ATP: asparagine 523 and glycine 560. Residue asparagine 561 coordinates Mg(2+). Serine 563 is a substrate binding site.

This sequence belongs to the FGAMS family. In terms of assembly, monomer. Part of the FGAM synthase complex composed of 1 PurL, 1 PurQ and 2 PurS subunits.

Its subcellular location is the cytoplasm. The catalysed reaction is N(2)-formyl-N(1)-(5-phospho-beta-D-ribosyl)glycinamide + L-glutamine + ATP + H2O = 2-formamido-N(1)-(5-O-phospho-beta-D-ribosyl)acetamidine + L-glutamate + ADP + phosphate + H(+). It functions in the pathway purine metabolism; IMP biosynthesis via de novo pathway; 5-amino-1-(5-phospho-D-ribosyl)imidazole from N(2)-formyl-N(1)-(5-phospho-D-ribosyl)glycinamide: step 1/2. Its function is as follows. Part of the phosphoribosylformylglycinamidine synthase complex involved in the purines biosynthetic pathway. Catalyzes the ATP-dependent conversion of formylglycinamide ribonucleotide (FGAR) and glutamine to yield formylglycinamidine ribonucleotide (FGAM) and glutamate. The FGAM synthase complex is composed of three subunits. PurQ produces an ammonia molecule by converting glutamine to glutamate. PurL transfers the ammonia molecule to FGAR to form FGAM in an ATP-dependent manner. PurS interacts with PurQ and PurL and is thought to assist in the transfer of the ammonia molecule from PurQ to PurL. The polypeptide is Phosphoribosylformylglycinamidine synthase subunit PurL (Prochlorococcus marinus (strain MIT 9312)).